A 346-amino-acid chain; its full sequence is tRNA pseudouridine synthase D (346 aa).

Catalysis depends on D83, which acts as the Nucleophile. One can recognise a TRUD domain in the interval 159 to 305; that stretch reads GVPNYFGEQR…LKQERRALRV (147 aa).

The protein belongs to the pseudouridine synthase TruD family.

The enzyme catalyses uridine(13) in tRNA = pseudouridine(13) in tRNA. Responsible for synthesis of pseudouridine from uracil-13 in transfer RNAs. The protein is tRNA pseudouridine synthase D of Hydrogenovibrio crunogenus (strain DSM 25203 / XCL-2) (Thiomicrospira crunogena).